Consider the following 345-residue polypeptide: RNA pseudouridine synthase 1 (345 aa).

Residue D134 is part of the active site.

The protein belongs to the pseudouridine synthase RluA family.

The enzyme catalyses a uridine in RNA = a pseudouridine in RNA. This Oryza sativa subsp. japonica (Rice) protein is RNA pseudouridine synthase 1.